Reading from the N-terminus, the 75-residue chain is uncharacterized protein (75 aa).

Residues 1-26 form the signal peptide; the sequence is MQFLERHFSVLFPVLFFFSFYPISFA.

It is found in the secreted. This is an uncharacterized protein from Schizosaccharomyces pombe (strain 972 / ATCC 24843) (Fission yeast).